A 285-amino-acid polypeptide reads, in one-letter code: Bifunctional protein FolD (285 aa).

Residues 165–167 (GRS) and Ser190 each bind NADP(+).

It belongs to the tetrahydrofolate dehydrogenase/cyclohydrolase family. Homodimer.

The enzyme catalyses (6R)-5,10-methylene-5,6,7,8-tetrahydrofolate + NADP(+) = (6R)-5,10-methenyltetrahydrofolate + NADPH. It catalyses the reaction (6R)-5,10-methenyltetrahydrofolate + H2O = (6R)-10-formyltetrahydrofolate + H(+). Its pathway is one-carbon metabolism; tetrahydrofolate interconversion. Functionally, catalyzes the oxidation of 5,10-methylenetetrahydrofolate to 5,10-methenyltetrahydrofolate and then the hydrolysis of 5,10-methenyltetrahydrofolate to 10-formyltetrahydrofolate. The chain is Bifunctional protein FolD from Burkholderia thailandensis (strain ATCC 700388 / DSM 13276 / CCUG 48851 / CIP 106301 / E264).